Here is a 143-residue protein sequence, read N- to C-terminus: Transcriptional regulator SlyA (143 aa).

Residues 2–135 (ESTLGSDLAR…LSGLIDKLEK (134 aa)) form the HTH marR-type domain. The segment at residues 49–72 (QIQLAKAIGIEQPSLVRTLDQLEE) is a DNA-binding region (H-T-H motif).

It belongs to the SlyA family. As to quaternary structure, homodimer.

Its function is as follows. Transcription regulator that can specifically activate or repress expression of target genes. This Yersinia pestis bv. Antiqua (strain Antiqua) protein is Transcriptional regulator SlyA.